The following is a 295-amino-acid chain: Glycine N-methyltransferase (295 aa).

Position 2 is an N-acetylvaline (valine 2). (6S)-5-methyl-5,6,7,8-tetrahydrofolate-binding residues include serine 4 and tyrosine 6. At serine 10 the chain carries Phosphoserine. 4 residues coordinate S-adenosyl-L-methionine: tyrosine 22, tryptophan 31, tyrosine 34, and arginine 41. Tyrosine 34 is modified (phosphotyrosine). Lysine 46 carries the N6-succinyllysine modification. S-adenosyl-L-methionine contacts are provided by residues alanine 65, 86–88, 117–118, 139–142, and arginine 178; these read DAS, NW, and LGNS. Residues lysine 193, lysine 198, and lysine 203 each carry the N6-succinyllysine modification. Residue histidine 217 coordinates (6S)-5-methyl-5,6,7,8-tetrahydrofolate. Tyrosine 223 provides a ligand contact to S-adenosyl-L-methionine. Arginine 242 is a binding site for (6S)-5-methyl-5,6,7,8-tetrahydrofolate.

This sequence belongs to the class I-like SAM-binding methyltransferase superfamily. Glycine N-methyltransferase family. In terms of assembly, homotetramer. As to expression, expressed only in liver, pancreas, and prostate.

The protein localises to the cytoplasm. It catalyses the reaction glycine + S-adenosyl-L-methionine = sarcosine + S-adenosyl-L-homocysteine + H(+). Its activity is regulated as follows. Inhibited by 5-methyltetrahydrofolate monoglutamate and by 5-methyltetrahydrofolate pentaglutamate, inhibition is much more effective by the pentaglutamate form than by the monoglutamate form. Two molecules of 5-methyltetrahydrofolate are bound per tetramer. The binding sites are localized between subunits. Inhibitor binding may preclude movements of the polypeptide chain that are necessary for enzyme activity. In terms of biological role, catalyzes the methylation of glycine by using S-adenosylmethionine (AdoMet) to form N-methylglycine (sarcosine) with the concomitant production of S-adenosylhomocysteine (AdoHcy), a reaction regulated by the binding of 5-methyltetrahydrofolate. Plays an important role in the regulation of methyl group metabolism by regulating the ratio between S-adenosyl-L-methionine and S-adenosyl-L-homocysteine. This Homo sapiens (Human) protein is Glycine N-methyltransferase.